Consider the following 304-residue polypeptide: Ribosomal RNA small subunit methyltransferase H (304 aa).

Residues 37–39 (GGH), Asp-57, Phe-85, Asp-100, and His-107 each bind S-adenosyl-L-methionine.

Belongs to the methyltransferase superfamily. RsmH family.

It is found in the cytoplasm. It carries out the reaction cytidine(1402) in 16S rRNA + S-adenosyl-L-methionine = N(4)-methylcytidine(1402) in 16S rRNA + S-adenosyl-L-homocysteine + H(+). Its function is as follows. Specifically methylates the N4 position of cytidine in position 1402 (C1402) of 16S rRNA. This chain is Ribosomal RNA small subunit methyltransferase H, found in Azobacteroides pseudotrichonymphae genomovar. CFP2.